A 134-amino-acid chain; its full sequence is Interleukin-5 (134 aa).

Positions 1-21 (MRMHLHLTLVALGAAYVCANA) are cleaved as a signal peptide. Asn76 and Asn90 each carry an N-linked (GlcNAc...) asparagine glycan.

This sequence belongs to the IL-5 family. Homodimer; disulfide-linked. Interacts with IL5RA. Interacts with CSF2RB.

The protein localises to the secreted. In terms of biological role, homodimeric cytokine expressed predominantly by T-lymphocytes and NK cells that plays an important role in the survival, differentiation, and chemotaxis of eosinophils. Also acts on activated and resting B-cells to induce immunoglobulin production, growth, and differentiation. Mechanistically, exerts its biological effects through a receptor composed of IL5RA subunit and the cytokine receptor common subunit beta/CSF2RB. Binding to the receptor leads to activation of various kinases including LYN, SYK and JAK2 and thereby propagates signals through the RAS-MAPK and JAK-STAT5 pathways respectively. The sequence is that of Interleukin-5 (IL5) from Bos taurus (Bovine).